A 257-amino-acid polypeptide reads, in one-letter code: 5-keto-4-deoxy-D-glucarate aldolase (257 aa).

Residue His-51 is the Proton acceptor of the active site. Substrate is bound at residue Gln-152. Glu-154 serves as a coordination point for Mg(2+). Residues Ser-179 and Asp-180 each contribute to the substrate site. Asp-180 lines the Mg(2+) pocket.

It belongs to the HpcH/HpaI aldolase family. KDGluc aldolase subfamily. As to quaternary structure, homohexamer; trimer of dimers. Mg(2+) is required as a cofactor.

It carries out the reaction 5-dehydro-4-deoxy-D-glucarate = 2-hydroxy-3-oxopropanoate + pyruvate. It catalyses the reaction 2-dehydro-3-deoxy-D-glucarate = 2-hydroxy-3-oxopropanoate + pyruvate. It functions in the pathway carbohydrate acid metabolism; galactarate degradation; D-glycerate from galactarate: step 2/3. Its function is as follows. Catalyzes the reversible retro-aldol cleavage of both 5-keto-4-deoxy-D-glucarate and 2-keto-3-deoxy-D-glucarate to pyruvate and tartronic semialdehyde. This chain is 5-keto-4-deoxy-D-glucarate aldolase, found in Citrobacter koseri (strain ATCC BAA-895 / CDC 4225-83 / SGSC4696).